Consider the following 175-residue polypeptide: Peptide deformylase (175 aa).

Fe cation is bound by residues cysteine 96 and histidine 138. Residue glutamate 139 is part of the active site. A Fe cation-binding site is contributed by histidine 142.

It belongs to the polypeptide deformylase family. Requires Fe(2+) as cofactor.

The enzyme catalyses N-terminal N-formyl-L-methionyl-[peptide] + H2O = N-terminal L-methionyl-[peptide] + formate. Removes the formyl group from the N-terminal Met of newly synthesized proteins. Requires at least a dipeptide for an efficient rate of reaction. N-terminal L-methionine is a prerequisite for activity but the enzyme has broad specificity at other positions. This Rhodopseudomonas palustris (strain ATCC BAA-98 / CGA009) protein is Peptide deformylase.